The primary structure comprises 195 residues: Adenylate kinase (195 aa).

11 to 16 (GAGKGT) lines the ATP pocket. The segment at 31–60 (STGDIFRAAVRNQTPLGQQVQAYLDSGRLV) is NMP. AMP contacts are provided by residues Thr-32, Arg-37, 58-60 (RLV), 86-89 (GFPR), and Gln-93. The segment at 127–137 (LRAEKESRKDD) is LID. An ATP-binding site is contributed by Arg-128. AMP contacts are provided by Arg-134 and Arg-145. Gln-173 provides a ligand contact to ATP.

It belongs to the adenylate kinase family. As to quaternary structure, monomer.

It localises to the cytoplasm. The enzyme catalyses AMP + ATP = 2 ADP. The protein operates within purine metabolism; AMP biosynthesis via salvage pathway; AMP from ADP: step 1/1. In terms of biological role, catalyzes the reversible transfer of the terminal phosphate group between ATP and AMP. Plays an important role in cellular energy homeostasis and in adenine nucleotide metabolism. The polypeptide is Adenylate kinase (Cyanothece sp. (strain PCC 7425 / ATCC 29141)).